A 1548-amino-acid chain; its full sequence is Multidrug resistance protein (1548 aa).

The Cytoplasmic segment spans residues 1–238; the sequence is MVDNGHVTIA…YHVWAQILPK (238 aa). Positions 231 to 514 constitute an ABC transmembrane type-1 1 domain; that stretch reads VWAQILPKLL…IPIIISSILQ (284 aa). A helical membrane pass occupies residues 239 to 256; it reads LLSDVTALMLPVLLEYFV. N-linked (GlcNAc...) asparagine glycosylation occurs at N263. 5 helical membrane-spanning segments follow: residues 266-287, 349-367, 375-392, 463-480, and 500-519; these read WGWG…SCSA, VMYF…LLLI, VPGM…AVIS, ATPT…HVSG, and VSFF…FVSA. Over 520-932 the chain is Cytoplasmic; sequence KRVTAFIECP…PWSTYVAYLK (413 aa). The ABC transporter 1 domain occupies 634–855; sequence VEEGDREYYQ…ALEETLRGEL (222 aa). Residue 667 to 674 participates in ATP binding; it reads GSTGSGKS. The next 4 membrane-spanning stretches (helical) occupy residues 933-950, 975-993, 1051-1070, and 1072-1088; these read SCGG…FALT, TYLY…GSPL, GYLY…IIMV, and VQPF…YSYY. Positions 940–1221 constitute an ABC transmembrane type-1 2 domain; that stretch reads WGCLLATFAL…LVRQVAMVEA (282 aa). N-linked (GlcNAc...) asparagine glycans are attached at residues N1095 and N1154. 2 helical membrane passes run 1164 to 1182 and 1186 to 1205; these read LEFL…GVIG and GASS…SMTL. The Cytoplasmic segment spans residues 1206–1548; that stretch reads TETLNWLVRQ…RIVQPAVLSD (343 aa). The region spanning 1286–1521 is the ABC transporter 2 domain; it reads LVLEGVQMRY…HQSMFHSMVE (236 aa). 1320 to 1327 contributes to the ATP binding site; it reads GRTGSGKS.

It belongs to the ABC transporter superfamily. ABCB family. Multidrug resistance exporter (TC 3.A.1.201) subfamily.

Its subcellular location is the membrane. It catalyses the reaction ATP + H2O + xenobioticSide 1 = ADP + phosphate + xenobioticSide 2.. In Leishmania tarentolae (Sauroleishmania tarentolae), this protein is Multidrug resistance protein (PGPA).